We begin with the raw amino-acid sequence, 59 residues long: Large ribosomal subunit protein uL30 (59 aa).

This sequence belongs to the universal ribosomal protein uL30 family. As to quaternary structure, part of the 50S ribosomal subunit.

This is Large ribosomal subunit protein uL30 from Staphylococcus saprophyticus subsp. saprophyticus (strain ATCC 15305 / DSM 20229 / NCIMB 8711 / NCTC 7292 / S-41).